A 147-amino-acid chain; its full sequence is MPTYAPKAGDTTRSWYVIDATDVVLGRLAVAAANLLRGKHKPTFAPNVDGGDFVIVVNADKVAFSGQKLDKKLAYRHSGYPGGLRSRTIGELMQKHPDRVVADAIVGMLPKNKLSRQIQRKLRVYAGPEHPHTAQQPIPYEIKQVAQ.

This sequence belongs to the universal ribosomal protein uL13 family. As to quaternary structure, part of the 50S ribosomal subunit.

This protein is one of the early assembly proteins of the 50S ribosomal subunit, although it is not seen to bind rRNA by itself. It is important during the early stages of 50S assembly. In Mycolicibacterium paratuberculosis (strain ATCC BAA-968 / K-10) (Mycobacterium paratuberculosis), this protein is Large ribosomal subunit protein uL13.